The primary structure comprises 575 residues: Cytokinin dehydrogenase 1 (575 aa).

The first 31 residues, 1–31 (MGLTSSLRFHRQNNKTFLGIFMILVLSCIPG), serve as a signal peptide directing secretion. Asn-14, Asn-38, and Asn-115 each carry an N-linked (GlcNAc...) asparagine glycan. In terms of domain architecture, FAD-binding PCMH-type spans 84–262 (YQLPPLAILH…TRARISLEPA (179 aa)). Positions 120, 122, and 124 each coordinate FAD. Position 125 is a pros-8alpha-FAD histidine (His-125). Residues Ser-126, Gln-130, Asp-186, Thr-191, Ser-197, Ile-201, and Ile-252 each contribute to the FAD site. N-linked (GlcNAc...) asparagine glycosylation is found at Asn-303, Asn-318, Asn-437, and Asn-467. FAD-binding residues include Tyr-498 and Gln-536.

It belongs to the oxygen-dependent FAD-linked oxidoreductase family. FAD serves as cofactor. Expressed in shoot apexes, lateral shoot meristems, growing tissues of young flowers, and weakly at the root-hypocotyl junction.

It localises to the vacuole. It carries out the reaction N(6)-dimethylallyladenine + A + H2O = 3-methyl-2-butenal + adenine + AH2. Its function is as follows. Catalyzes the oxidation of cytokinins, a family of N(6)-substituted adenine derivatives that are plant hormones, where the substituent is an isopentenyl group. Catalyzes in vitro the oxidation of various types of cytokinin nucleotides that are known as direct products of cytokinin biosynthesis. Promotes adventitious root initiation downstream of MYC2-dependent jasmonate signaling. Cytokinin degraded by CKX1 is required for cell division in the female gametophyte by modulating the expression of cell cycle genes. This is Cytokinin dehydrogenase 1 (CKX1) from Arabidopsis thaliana (Mouse-ear cress).